Here is a 295-residue protein sequence, read N- to C-terminus: Ribosome production factor 1 (295 aa).

Residues 24–47 (HEKNKERHTMRRKRAKEERENPEL) are disordered. Positions 38–47 (AKEERENPEL) are enriched in basic and acidic residues. In terms of domain architecture, Brix spans 93 to 276 (PKIFLTTNVN…LKRLQRGIKE (184 aa)). The RNA-binding stretch occupies residues 254 to 271 (VGLQELGPQFTLKLKRLQ).

Part of a complex that includes BRX1, RPF1, RPF2 and SSF1 or SSF2.

The protein resides in the nucleus. It localises to the nucleolus. Essential protein. Required for biogenesis of the 60S ribosomal subunit. In Saccharomyces cerevisiae (strain ATCC 204508 / S288c) (Baker's yeast), this protein is Ribosome production factor 1 (RPF1).